Here is a 664-residue protein sequence, read N- to C-terminus: UvrABC system protein B (664 aa).

The region spanning 23-180 (EGLNRGMRFQ…EKLAKIGYQR (158 aa)) is the Helicase ATP-binding domain. 36–43 (GVTGSGKT) contributes to the ATP binding site. The Beta-hairpin signature appears at 89–112 (YYDYYQPEAYIPTKDLYIEKNADI). A Helicase C-terminal domain is found at 426-588 (QVDDLINEIV…ITPRSIVKPL (163 aa)). Positions 622 to 657 (EEYVALLEEEMYRAASELRYEDAAALRDELFRVKET) constitute a UVR domain.

Belongs to the UvrB family. In terms of assembly, forms a heterotetramer with UvrA during the search for lesions. Interacts with UvrC in an incision complex.

The protein localises to the cytoplasm. Its function is as follows. The UvrABC repair system catalyzes the recognition and processing of DNA lesions. A damage recognition complex composed of 2 UvrA and 2 UvrB subunits scans DNA for abnormalities. Upon binding of the UvrA(2)B(2) complex to a putative damaged site, the DNA wraps around one UvrB monomer. DNA wrap is dependent on ATP binding by UvrB and probably causes local melting of the DNA helix, facilitating insertion of UvrB beta-hairpin between the DNA strands. Then UvrB probes one DNA strand for the presence of a lesion. If a lesion is found the UvrA subunits dissociate and the UvrB-DNA preincision complex is formed. This complex is subsequently bound by UvrC and the second UvrB is released. If no lesion is found, the DNA wraps around the other UvrB subunit that will check the other stand for damage. The chain is UvrABC system protein B from Thermotoga neapolitana (strain ATCC 49049 / DSM 4359 / NBRC 107923 / NS-E).